Consider the following 3093-residue polypeptide: Genome polyprotein (3093 aa).

A Peptidase S30 domain is found at 255 to 403; sequence KRLLRHVHQA…TTTGERIEYY (149 aa). Catalysis depends on for P1 proteinase activity residues His-311, Asp-323, and Ser-355. The 120-residue stretch at 690-809 folds into the Peptidase C6 domain; sequence HYVPKVGYCY…ASELKEYEIG (120 aa). Catalysis depends on for helper component proteinase activity residues Cys-698 and His-769. The Helicase ATP-binding domain maps to 1215-1366; sequence RVLADKDNEF…AQKSLDIMTL (152 aa). 1228 to 1235 provides a ligand contact to ATP; it reads GHVGCGKS. Positions 1316–1319 match the DEVH box motif; that stretch reads DEVH. A Helicase C-terminal domain is found at 1367–1546; that stretch reads PTMTPLDFVK…QVPPVLRNVN (180 aa). The short motif at 1883 to 1895 is the Nuclear localization signal element; it reads DKVRKKANVHAMQ. Tyr-1915 is modified (O-(5'-phospho-RNA)-tyrosine). Residues 2041–2257 form the Peptidase C4 domain; it reads SKALYGGPRC…VDVGGLYIHN (217 aa). Active-site for nuclear inclusion protein A activity residues include His-2082, Asp-2121, and Cys-2193. One can recognise a RdRp catalytic domain in the interval 2516–2639; it reads EWFIDADGSQ…NANEEAKDVV (124 aa). Low complexity predominate over residues 2800–2826; sequence NAAATSGATTPAQNVGAGTTTPAKATP. Residues 2800-2842 form a disordered region; sequence NAAATSGATTPAQNVGAGTTTPAKATPQSGRRPSFGSLIDNPI.

The protein belongs to the potyviridae genome polyprotein family. VPg is uridylylated by the polymerase and is covalently attached to the 5'-end of the genomic RNA. This uridylylated form acts as a nucleotide-peptide primer for the polymerase. In terms of processing, genome polyprotein of potyviruses undergoes post-translational proteolytic processing by the main proteinase NIa-pro resulting in the production of at least ten individual proteins. The P1 proteinase and the HC-pro cleave only their respective C-termini autocatalytically. 6K1 is essential for proper proteolytic separation of P3 from CI.

It is found in the host cytoplasmic vesicle. It localises to the virion. It catalyses the reaction RNA(n) + a ribonucleoside 5'-triphosphate = RNA(n+1) + diphosphate. The catalysed reaction is Hydrolyzes glutaminyl bonds, and activity is further restricted by preferences for the amino acids in P6 - P1' that vary with the species of potyvirus, e.g. Glu-Xaa-Xaa-Tyr-Xaa-Gln-|-(Ser or Gly) for the enzyme from tobacco etch virus. The natural substrate is the viral polyprotein, but other proteins and oligopeptides containing the appropriate consensus sequence are also cleaved.. It carries out the reaction Hydrolyzes a Gly-|-Gly bond at its own C-terminus, commonly in the sequence -Tyr-Xaa-Val-Gly-|-Gly, in the processing of the potyviral polyprotein.. Its function is as follows. Required for aphid transmission and also has proteolytic activity. Only cleaves a Gly-Gly dipeptide at its own C-terminus. Interacts with virions and aphid stylets. Acts as a suppressor of RNA-mediated gene silencing, also known as post-transcriptional gene silencing (PTGS), a mechanism of plant viral defense that limits the accumulation of viral RNAs. May have RNA-binding activity. Has helicase activity. It may be involved in replication. Functionally, indispensable for virus replication. Reduces the abundance of host transcripts related to jasmonic acid biosynthesis therefore altering the host defenses. In order to increase its own stability, decreases host protein degradation pathways. In terms of biological role, indispensable for virus replication. Its function is as follows. Mediates the cap-independent, EIF4E-dependent translation of viral genomic RNAs. Binds to the cap-binding site of host EIF4E and thus interferes with the host EIF4E-dependent mRNA export and translation. VPg-RNA directly binds EIF4E and is a template for transcription. Also forms trimeric complexes with EIF4E-EIF4G, which are templates for translation. Has RNA-binding and proteolytic activities. Functionally, an RNA-dependent RNA polymerase that plays an essential role in the virus replication. In terms of biological role, involved in aphid transmission, cell-to-cell and systemis movement, encapsidation of the viral RNA and in the regulation of viral RNA amplification. The protein is Genome polyprotein of Brome streak virus (strain 11-Cal) (BStV).